The following is a 334-amino-acid chain: Putative B3 domain-containing protein At5g66980 (334 aa).

2 consecutive DNA-binding regions (TF-B3) follow at residues 8-105 and 218-317; these read LQFF…FAND and HPHF…VSGR.

Its subcellular location is the nucleus. This Arabidopsis thaliana (Mouse-ear cress) protein is Putative B3 domain-containing protein At5g66980.